The chain runs to 1385 residues: Defecation cycle abnormal dec-7 (1385 aa).

An N-terminal signal peptide occupies residues 1–19 (MWTARHAVALLVVLTYAYS). A glycan (N-linked (GlcNAc...) asparagine) is linked at Asn-156. The interval 234 to 262 (SQTNYGAPNYQQAGAQSAANQQFSNPSQY) is disordered. Low complexity predominate over residues 242-261 (NYQQAGAQSAANQQFSNPSQ). The NIDO domain maps to 285-450 (QIYGKRKKRQ…GRWIHRVDEV (166 aa)). N-linked (GlcNAc...) asparagine glycosylation is found at Asn-313, Asn-386, Asn-413, Asn-458, Asn-480, Asn-562, and Asn-583. An AMOP domain is found at 681-840 (GRNWPIDMCI…DHCEFYYWRR (160 aa)). One can recognise a VWFD domain in the interval 852 to 1088 (AAGYIYGEPH…FWKIDGTNDK (237 aa)). N-linked (GlcNAc...) asparagine glycans are attached at residues Asn-909, Asn-921, Asn-975, Asn-1009, and Asn-1124. The region spanning 1179-1238 (ISCGPLLKKEGVVKTPPAANYLDGDKVVFSCKPKYYIHGDIERVCRNGTWSPGWWAWCRD) is the Sushi domain. 2 disulfides stabilise this stretch: Cys-1181–Cys-1223 and Cys-1209–Cys-1236. Asn-1225 carries N-linked (GlcNAc...) asparagine glycosylation. Residues 1251-1271 (LLSIFGISLIFVIFFCILWNI) traverse the membrane as a helical segment. The segment at 1321–1385 (MNQPSRPIPS…GNMRFETSAI (65 aa)) is disordered.

In terms of tissue distribution, highly expressed in the intestinal epithelia.

It is found in the membrane. It localises to the cell junction. In terms of biological role, may negatively regulate activity of innexin gap junction protein inx-16, thereby mediating the rhythmic frequency of the defecation motor program. Required for the clustering of inx-16 to the cell-cell junction of the intestinal epithelia. Probably dispensable for intestinal integrity. May be a cytokine receptor. This Caenorhabditis elegans protein is Defecation cycle abnormal dec-7.